The sequence spans 142 residues: Small ribosomal subunit protein uS12 (142 aa).

It belongs to the universal ribosomal protein uS12 family. Part of the 30S ribosomal subunit.

Functionally, with S4 and S5 plays an important role in translational accuracy. Located at the interface of the 30S and 50S subunits. The protein is Small ribosomal subunit protein uS12 of Methanosarcina mazei (strain ATCC BAA-159 / DSM 3647 / Goe1 / Go1 / JCM 11833 / OCM 88) (Methanosarcina frisia).